Reading from the N-terminus, the 768-residue chain is Cullin-3-A (768 aa).

A disordered region spans residues 677 to 698 (VAAKQGESDPERKETRQKVDDD). Over residues 682–698 (GESDPERKETRQKVDDD) the composition is skewed to basic and acidic residues. In terms of domain architecture, Cullin neddylation spans 698-760 (DRKHEIEAAI…REYLARTPED (63 aa)). Residue Lys-712 forms a Glycyl lysine isopeptide (Lys-Gly) (interchain with G-Cter in NEDD8) linkage.

This sequence belongs to the cullin family. Component of multiple BCR (BTB-CUL3-RBX1) E3 ubiquitin-protein ligase complexes formed of cul3, rbx1 and a variable BTB domain-containing protein acting as both, adapter to cullin and substrate recognition subunit. Interacts with btbd6. In terms of processing, neddylated. Attachment of NEDD8 is required for the E3 ubiquitin-protein ligase activity of the SCF-like complex.

The protein localises to the nucleus. It functions in the pathway protein modification; protein ubiquitination. Probable core component of cullin-based SCF-like E3 ubiquitin-protein ligase complexes which mediate the ubiquitination and subsequent proteasomal degradation of target proteins. The E3 ubiquitin-protein ligase activity of the complex is dependent on the neddylation of the cullin subunit. Involved in ER-Golgi transport by regulating the size of COPII coats, thereby playing a key role in collagen export, which is required for embryonic stem (ES) cells division. May play a role in the regulation of mittotic entry via ubiquitination of aurka. The chain is Cullin-3-A (cul3a) from Xenopus laevis (African clawed frog).